Reading from the N-terminus, the 334-residue chain is Tryptophan--tRNA ligase (334 aa).

ATP-binding positions include 11–13 (QPS) and 19–20 (GN). The 'HIGH' region motif lies at 12 to 20 (PSGELTIGN). Position 135 (Asp135) interacts with L-tryptophan. Residues 147–149 (GED), Val186, and 195–199 (KMSKS) each bind ATP. The 'KMSKS' region motif lies at 195–199 (KMSKS).

Belongs to the class-I aminoacyl-tRNA synthetase family. In terms of assembly, homodimer.

The protein localises to the cytoplasm. The catalysed reaction is tRNA(Trp) + L-tryptophan + ATP = L-tryptophyl-tRNA(Trp) + AMP + diphosphate + H(+). Functionally, catalyzes the attachment of tryptophan to tRNA(Trp). This chain is Tryptophan--tRNA ligase, found in Shigella flexneri.